The chain runs to 344 residues: Protein L-Myc-1-A (344 aa).

Disordered regions lie at residues 100–162 and 209–261; these read RLTT…DDEI and PPEP…EDIV. 3 stretches are compositionally biased toward polar residues: residues 102–112, 123–133, and 236–255; these read TTASPRATNPQ, PGVNSIEQNAN, and PALQ…SGSS. Positions 261–313 constitute a bHLH domain; that stretch reads VKKKNHNYLERKRRNDLRSRFLALREEVPSLTRSTKTPKVVVLSKATEFLKGL. The tract at residues 313–341 is leucine-zipper; the sequence is LVIQEQQLTAEKFKLWSRHQQLLRRISHL.

Efficient DNA binding requires dimerization with another bHLH protein. Binds DNA as a heterodimer with MAX. High levels in oocytes, modest levels in kidney and low levels in spleen.

The protein resides in the nucleus. The polypeptide is Protein L-Myc-1-A (mycl1-a) (Xenopus laevis (African clawed frog)).